We begin with the raw amino-acid sequence, 164 residues long: Flavodoxin (164 aa).

One can recognise a Flavodoxin-like domain in the interval 4–160 (IGIFFGTDSG…RISKWVEQVK (157 aa)).

Belongs to the flavodoxin family. It depends on FMN as a cofactor.

Low-potential electron donor to a number of redox enzymes. The chain is Flavodoxin (fldA) from Helicobacter pylori (strain ATCC 700392 / 26695) (Campylobacter pylori).